Consider the following 171-residue polypeptide: NADP-reducing hydrogenase subunit HndA (171 aa).

[2Fe-2S] cluster contacts are provided by cysteine 98, cysteine 103, cysteine 139, and cysteine 143.

The protein belongs to the complex I 24 kDa subunit family. In terms of assembly, heterotetramer composed of HndA, HndB, HndC and HndD subunits. HndA and HndB could form a heterodimeric intermediate in the electron transfer between the active site of hydrogenase subunit HndD and the NADP reduction site of the reducing subunit HndC. The cofactor is [2Fe-2S] cluster.

The catalysed reaction is H2 + NADP(+) = NADPH + H(+). Inhibited by oxygen. Catalyzes the reduction of NADP in the presence of molecular H(2) to yield NADPH. This Solidesulfovibrio fructosivorans (Desulfovibrio fructosivorans) protein is NADP-reducing hydrogenase subunit HndA (hndA).